The chain runs to 392 residues: Spermatogenesis associated 6-like protein (392 aa).

2 positions are modified to phosphoserine: serine 260 and serine 263. The segment covering 286–301 (SCLDSSQFGKSSSSKQ) has biased composition (low complexity). The segment at 286 to 305 (SCLDSSQFGKSSSSKQGDAD) is disordered.

This sequence belongs to the SPATA6 family.

In Homo sapiens (Human), this protein is Spermatogenesis associated 6-like protein (SPATA6L).